Reading from the N-terminus, the 551-residue chain is Hydroxylamine reductase (551 aa).

Positions 3, 6, 18, and 25 each coordinate [2Fe-2S] cluster. His-249, Glu-273, Cys-317, Cys-405, Cys-433, Cys-459, Glu-493, and Lys-495 together coordinate hybrid [4Fe-2O-2S] cluster. Cys-405 carries the cysteine persulfide modification.

This sequence belongs to the HCP family. It depends on [2Fe-2S] cluster as a cofactor. Hybrid [4Fe-2O-2S] cluster is required as a cofactor.

The protein localises to the cytoplasm. The catalysed reaction is A + NH4(+) + H2O = hydroxylamine + AH2 + H(+). In terms of biological role, catalyzes the reduction of hydroxylamine to form NH(3) and H(2)O. This chain is Hydroxylamine reductase, found in Actinobacillus pleuropneumoniae serotype 5b (strain L20).